The following is an 89-amino-acid chain: Small ribosomal subunit protein uS15 (89 aa).

It belongs to the universal ribosomal protein uS15 family. In terms of assembly, part of the 30S ribosomal subunit. Forms a bridge to the 50S subunit in the 70S ribosome, contacting the 23S rRNA.

Functionally, one of the primary rRNA binding proteins, it binds directly to 16S rRNA where it helps nucleate assembly of the platform of the 30S subunit by binding and bridging several RNA helices of the 16S rRNA. Its function is as follows. Forms an intersubunit bridge (bridge B4) with the 23S rRNA of the 50S subunit in the ribosome. The protein is Small ribosomal subunit protein uS15 of Prosthecochloris aestuarii (strain DSM 271 / SK 413).